Here is a 143-residue protein sequence, read N- to C-terminus: Class I hydrophobin 20 (143 aa).

Positions 1-22 (MLSHPMKLLFFVFALSALLAAA) are cleaved as a signal peptide. Intrachain disulfides connect Cys-54/Cys-123, Cys-62/Cys-117, Cys-63/Cys-102, and Cys-124/Cys-137.

This sequence belongs to the fungal hydrophobin family. In terms of assembly, self-assembles to form functional amyloid fibrils called rodlets. Self-assembly into fibrillar rodlets occurs spontaneously at hydrophobic:hydrophilic interfaces and the rodlets further associate laterally to form amphipathic monolayers.

The protein resides in the secreted. Its subcellular location is the cell wall. In terms of biological role, aerial growth, conidiation, and dispersal of filamentous fungi in the environment rely upon a capability of their secreting small amphipathic proteins called hydrophobins (HPBs) with low sequence identity. Class I can self-assemble into an outermost layer of rodlet bundles on aerial cell surfaces, conferring cellular hydrophobicity that supports fungal growth, development and dispersal; whereas Class II form highly ordered films at water-air interfaces through intermolecular interactions but contribute nothing to the rodlet structure. Hydph20 is a class I hydrophobin involved in mycelial growth. This is Class I hydrophobin 20 from Pleurotus ostreatus (strain PC15) (Oyster mushroom).